A 361-amino-acid chain; its full sequence is Probable cadicidin biosynthesis thioesterase (361 aa).

The 4Fe-4S ferredoxin-type domain maps to 2 to 29; sequence RVTVDSEQCVGAGQCVLNAPEVFDQDDD. Residues 36–110 are disordered; that stretch reads RADPTSGTTR…RRDSPVTTAD (75 aa). A compositionally biased stretch (basic residues) spans 46–61; that stretch reads RSARRATCARRPRSSS. 2 stretches are compositionally biased toward basic and acidic residues: residues 62-74 and 94-104; these read RRTEPAGCADRHR and TDRRQNHRRDS. The active site involves Ser-201.

The protein belongs to the thioesterase family.

It functions in the pathway antibiotic biosynthesis; candicidin biosynthesis. Its function is as follows. Probable thioesterase involved in the biosynthesis of candicidin. Could release the macrolide ring from the polyketide synthase. The sequence is that of Probable cadicidin biosynthesis thioesterase from Streptomyces griseus.